Here is a 571-residue protein sequence, read N- to C-terminus: uncharacterized protein (571 aa).

The interval 1–25 is disordered; that stretch reads MAPSVATSLKAEILPSPRTSSPSSN. The FAD-binding FR-type domain maps to 135 to 389; it reads FSVFPAPILD…RGLHKNAFAT (255 aa). The disordered stretch occupies residues 447–479; it reads NPLQKSSDDDASSTVSQQTETEMDSFEVKKDGT.

It belongs to the flavoprotein pyridine nucleotide cytochrome reductase family. Requires FAD as cofactor.

This is an uncharacterized protein from Schizosaccharomyces pombe (strain 972 / ATCC 24843) (Fission yeast).